We begin with the raw amino-acid sequence, 192 residues long: MIYFGRSIDNHYTTMMTKTLEIDLRSAEGLKLNRRPIKKKTFAVVKIDEKCRKSNLDESRRSNPTWNYKSEMPINGNEQFIFIEVFYRTGSGHDKKIGEAKIPTNDFMGRYSPEGHLNFLSYRLRDEFGDKCGIVNLSILVKSDPTRDYGACSSQAAVTGLWRPRLETASIDGYGGRTVTGVPVWGLYQRQF.

Residues 1–119 enclose the C2 domain; sequence MIYFGRSIDN…RYSPEGHLNF (119 aa).

In terms of assembly, interacts with BON1 (via VWA domain), BON2 and BON3. As to expression, expressed in roots, leaves, stems and flowers.

Its subcellular location is the membrane. Functionally, negative regulator of cell death and defense responses. Exhibits calcium-dependent phospholipid binding properties. In Arabidopsis thaliana (Mouse-ear cress), this protein is BON1-associated protein 1 (BAP1).